A 61-amino-acid chain; its full sequence is Small ribosomal subunit protein uS14B (61 aa).

Zn(2+) contacts are provided by Cys24, Cys27, Cys40, and Cys43.

It belongs to the universal ribosomal protein uS14 family. Zinc-binding uS14 subfamily. As to quaternary structure, part of the 30S ribosomal subunit. Contacts proteins S3 and S10. The cofactor is Zn(2+).

Its function is as follows. Binds 16S rRNA, required for the assembly of 30S particles and may also be responsible for determining the conformation of the 16S rRNA at the A site. This Shouchella clausii (strain KSM-K16) (Alkalihalobacillus clausii) protein is Small ribosomal subunit protein uS14B.